Reading from the N-terminus, the 425-residue chain is Putative E3 ubiquitin-protein ligase UBR7 (425 aa).

A UBR-type zinc finger spans residues glutamate 44–aspartate 116. The PHD-type; atypical zinc finger occupies glycine 132–arginine 188. The tract at residues leucine 212–leucine 269 is disordered. Glycyl lysine isopeptide (Lys-Gly) (interchain with G-Cter in SUMO2) cross-links involve residues lysine 225 and lysine 252. Residues glycine 235–asparagine 257 are compositionally biased toward basic and acidic residues. Serine 264 is modified (phosphoserine). Residues lysine 274 and lysine 398 each participate in a glycyl lysine isopeptide (Lys-Gly) (interchain with G-Cter in SUMO2) cross-link.

In terms of tissue distribution, expressed in testis and sperm (at protein level).

The enzyme catalyses S-ubiquitinyl-[E2 ubiquitin-conjugating enzyme]-L-cysteine + [acceptor protein]-L-lysine = [E2 ubiquitin-conjugating enzyme]-L-cysteine + N(6)-ubiquitinyl-[acceptor protein]-L-lysine.. It functions in the pathway protein modification; protein ubiquitination. Its function is as follows. E3 ubiquitin-protein ligase which is a component of the N-end rule pathway. Recognizes and binds to proteins bearing specific N-terminal residues that are destabilizing according to the N-end rule, leading to their ubiquitination and subsequent degradation. The polypeptide is Putative E3 ubiquitin-protein ligase UBR7 (Ubr7) (Mus musculus (Mouse)).